A 200-amino-acid chain; its full sequence is Casparian strip membrane protein 1 (200 aa).

Residues 1-38 (MSTTIEIPAESSAVAKGKAPLIGASSSSYEKKGGYKKG) lie on the Cytoplasmic side of the membrane. A helical membrane pass occupies residues 39-59 (IAIFDFILRLGAVISALSAAA). The Extracellular portion of the chain corresponds to 60–88 (TMGTSDETLPFFTQFFQFEAGYDDFPTFQ). The chain crosses the membrane as a helical span at residues 89–109 (FFVIAMGFVGGYLVLSLPFSV). The Cytoplasmic portion of the chain corresponds to 110–121 (VAIIRPHAVGIR). Residues 122-142 (LLLLILDTVALTLNTAAAAAA) traverse the membrane as a helical segment. The Extracellular segment spans residues 143-175 (AAIVYLAHNGNQSANWLAVCQQFGDFCQKVSGG). The N-linked (GlcNAc...) asparagine glycan is linked to asparagine 153. The chain crosses the membrane as a helical span at residues 176–196 (VVASFVSVLVFLLLVVMSAVA). At 197–200 (LRKH) the chain is on the cytoplasmic side.

This sequence belongs to the Casparian strip membrane proteins (CASP) family. In terms of assembly, homodimer and heterodimers.

The protein localises to the cell membrane. Regulates membrane-cell wall junctions and localized cell wall deposition. Required for establishment of the Casparian strip membrane domain (CSD) and the subsequent formation of Casparian strips, a cell wall modification of the root endodermis that determines an apoplastic barrier between the intraorganismal apoplasm and the extraorganismal apoplasm and prevents lateral diffusion. This Ricinus communis (Castor bean) protein is Casparian strip membrane protein 1.